Reading from the N-terminus, the 443-residue chain is Transmembrane protein 184C (443 aa).

The next 7 membrane-spanning stretches (helical) occupy residues 15-35, 46-66, 84-104, 182-202, 210-230, 252-272, and 284-304; these read LVVLLYIVGLIVGVPICIWKL, AWFIAGIFVLMTIPISLWGIL, ILWMVPIYSVDSWIALKYPDI, PVTTVIALICQLTGVYGEGDF, YLVIINNVSQVFAMYCLVLFY, VVFVSFWQAVFIAILVKAGVI, and VATGLQDFIICVEMFLAAVAH. Positions 369–378 are enriched in polar residues; that stretch reads TSLLSSSTQD. The segment at 369–422 is disordered; the sequence is TSLLSSSTQDPISAASSIPPSPSGHYQGFGQTITPQTTPTATTMPEELYSADSP. Low complexity predominate over residues 399-411; sequence QTITPQTTPTATT.

Belongs to the TMEM184 family.

It localises to the membrane. May play a role in cell growth. This chain is Transmembrane protein 184C (tmem184c), found in Xenopus tropicalis (Western clawed frog).